Consider the following 155-residue polypeptide: Secreted RxLR effector protein 38 (155 aa).

The N-terminal stretch at 1–17 (MHLIYIVMAATATTLHA) is a signal peptide. The RxLR-dEER motif lies at 49–64 (RFLRGAYEDVHREEER).

This sequence belongs to the RxLR effector family.

The protein resides in the secreted. The protein localises to the host nucleus. Its subcellular location is the host cytoplasm. Secreted effector that completely suppresses the host cell death induced by cell death-inducing proteins. In Plasmopara viticola (Downy mildew of grapevine), this protein is Secreted RxLR effector protein 38.